The sequence spans 481 residues: Zinc metalloproteinase/disintegrin (481 aa).

Positions 1 to 20 are cleaved as a signal peptide; the sequence is MIQVLLVTICLAVFPYQGSS. Residues 21–190 constitute a propeptide that is removed on maturation; sequence IILESGNVDD…KASQLYLTPE (170 aa). Residues 197–392 form the Peptidase M12B domain; the sequence is RYIKLAIVVD…DNPQCILNAP (196 aa). Intrachain disulfides connect cysteine 308/cysteine 387, cysteine 349/cysteine 371, and cysteine 351/cysteine 354. Histidine 333 serves as a coordination point for Zn(2+). Glutamate 334 is an active-site residue. Residues histidine 337 and histidine 343 each coordinate Zn(2+). A propeptide spanning residues 393–408 is cleaved from the precursor; the sequence is LRTDTVSTPVSGNEFL. A Disintegrin domain is found at 400 to 481; that stretch reads TPVSGNEFLE…ADCPRNGLYS (82 aa). Disulfide bonds link cysteine 414–cysteine 429, cysteine 416–cysteine 424, cysteine 423–cysteine 446, cysteine 437–cysteine 443, cysteine 442–cysteine 467, and cysteine 455–cysteine 474. Positions 459 to 461 match the Cell attachment site motif; it reads RGD.

This sequence belongs to the venom metalloproteinase (M12B) family. P-II subfamily. P-IIa sub-subfamily. As to quaternary structure, monomer. Requires Zn(2+) as cofactor. As to expression, expressed by the venom gland.

The protein resides in the secreted. Impairs hemostasis in the envenomed animal. Its function is as follows. Inhibits platelet aggregation induced by ADP, thrombin, platelet-activating factor and collagen. Acts by inhibiting fibrinogen interaction with platelet receptors GPIIb/GPIIIa (ITGA2B/ITGB3). The sequence is that of Zinc metalloproteinase/disintegrin from Protobothrops elegans (Elegant pitviper).